Consider the following 229-residue polypeptide: Tubulin-specific chaperone B (229 aa).

The region spanning 170–212 (GATKFKEGVWVGVKYDEPVGKNDGSVAGVRYFDCDPKYGGFVR) is the CAP-Gly domain.

This sequence belongs to the TBCB family. Supercomplex made of cofactors A to E. Cofactors A and D function by capturing and stabilizing tubulin in a quasi-native conformation. Cofactor E binds to the cofactor D-tubulin complex; interaction with cofactor C then causes the release of tubulin polypeptides that are committed to the native state.

The protein resides in the cytoplasm. Its subcellular location is the cytoskeleton. In terms of biological role, binds to alpha-tubulin folding intermediates after their interaction with cytosolic chaperonin in the pathway leading from newly synthesized tubulin to properly folded heterodimer. This chain is Tubulin-specific chaperone B, found in Caenorhabditis elegans.